We begin with the raw amino-acid sequence, 673 residues long: tRNA uridine 5-carboxymethylaminomethyl modification enzyme MnmG (673 aa).

Residue 17–22 (GGGHAG) coordinates FAD. 284–298 (GPRYCPSVEDKINRF) is an NAD(+) binding site.

This sequence belongs to the MnmG family. In terms of assembly, homodimer. Heterotetramer of two MnmE and two MnmG subunits. Requires FAD as cofactor.

The protein localises to the cytoplasm. NAD-binding protein involved in the addition of a carboxymethylaminomethyl (cmnm) group at the wobble position (U34) of certain tRNAs, forming tRNA-cmnm(5)s(2)U34. The protein is tRNA uridine 5-carboxymethylaminomethyl modification enzyme MnmG of Polaromonas sp. (strain JS666 / ATCC BAA-500).